A 1004-amino-acid polypeptide reads, in one-letter code: 2-oxoglutarate dehydrogenase E1 component (1004 aa).

It belongs to the alpha-ketoglutarate dehydrogenase family. In terms of assembly, homodimer. Part of the 2-oxoglutarate dehydrogenase (OGDH) complex composed of E1 (2-oxoglutarate dehydrogenase), E2 (dihydrolipoamide succinyltransferase) and E3 (dihydrolipoamide dehydrogenase); the complex contains multiple copies of the three enzymatic components (E1, E2 and E3). Requires thiamine diphosphate as cofactor.

It catalyses the reaction N(6)-[(R)-lipoyl]-L-lysyl-[protein] + 2-oxoglutarate + H(+) = N(6)-[(R)-S(8)-succinyldihydrolipoyl]-L-lysyl-[protein] + CO2. Functionally, E1 component of the 2-oxoglutarate dehydrogenase (OGDH) complex which catalyzes the decarboxylation of 2-oxoglutarate, the first step in the conversion of 2-oxoglutarate to succinyl-CoA and CO(2). The polypeptide is 2-oxoglutarate dehydrogenase E1 component (Brucella canis (strain ATCC 23365 / NCTC 10854 / RM-666)).